The primary structure comprises 132 residues: Translation initiation factor 5A (132 aa).

Hypusine is present on K37.

Belongs to the eIF-5A family.

The protein localises to the cytoplasm. Its function is as follows. Functions by promoting the formation of the first peptide bond. The chain is Translation initiation factor 5A (eif5a) from Methanocaldococcus jannaschii (strain ATCC 43067 / DSM 2661 / JAL-1 / JCM 10045 / NBRC 100440) (Methanococcus jannaschii).